The chain runs to 89 residues: MSLDTAEKQKLIENHQVHPTDTGSVEVQVAMLSKRISKLSDHLQGNIHDFASRQGLLKMIGKRKRLLSYLKDKNVQKYQELVKKIGIRG.

Residues 1–18 (MSLDTAEKQKLIENHQVH) are compositionally biased toward basic and acidic residues. Residues 1–23 (MSLDTAEKQKLIENHQVHPTDTG) are disordered.

The protein belongs to the universal ribosomal protein uS15 family. As to quaternary structure, part of the 30S ribosomal subunit. Forms a bridge to the 50S subunit in the 70S ribosome, contacting the 23S rRNA.

Its function is as follows. One of the primary rRNA binding proteins, it binds directly to 16S rRNA where it helps nucleate assembly of the platform of the 30S subunit by binding and bridging several RNA helices of the 16S rRNA. Functionally, forms an intersubunit bridge (bridge B4) with the 23S rRNA of the 50S subunit in the ribosome. The sequence is that of Small ribosomal subunit protein uS15 from Prochlorococcus marinus (strain AS9601).